Reading from the N-terminus, the 120-residue chain is uncharacterized protein (120 aa).

Residues 63 to 83 (IDMSCVICFNFSCHLFVVIFI) form a helical membrane-spanning segment.

The protein localises to the membrane. This is an uncharacterized protein from Saccharomyces cerevisiae (strain ATCC 204508 / S288c) (Baker's yeast).